A 337-amino-acid chain; its full sequence is Trace amine-associated receptor 5 (337 aa).

Residues 1 to 38 are Extracellular-facing; that stretch reads MRAVLLPGSGEQPTAFCYQVNGSCPRTVHPLAIQVVIY. Residue asparagine 21 is glycosylated (N-linked (GlcNAc...) asparagine). 2 disulfides stabilise this stretch: cysteine 24/cysteine 188 and cysteine 99/cysteine 192. Residues 39 to 59 traverse the membrane as a helical segment; it reads LACAVGVLITVLGNLFVVFAV. At 60–70 the chain is on the cytoplasmic side; sequence SYFKVLHTPTN. Residues 71–91 form a helical membrane-spanning segment; sequence FLLLSLALADMLLGLLVLPLS. Residues 92-109 lie on the Extracellular side of the membrane; the sequence is TVRSVESCWFFGDFLCRL. A helical transmembrane segment spans residues 110-130; that stretch reads HTYLDTLFCLTSIFHLCFISI. Over 131–154 the chain is Cytoplasmic; the sequence is DRHCAICDPLLYPSKFTVRTALRY. Residues 155–175 form a helical membrane-spanning segment; the sequence is IVAGWGIPAAYTAFFLYTDVV. Residues 176–189 form an extracellular Loop 2 (ECL2) region; the sequence is ERALSQWLEEMPCV. At 176–204 the chain is on the extracellular side; sequence ERALSQWLEEMPCVGSCQLLFNKFWGWLN. Residues 205–225 form a helical membrane-spanning segment; the sequence is FPAFFVPCLIMISLYLKIFVV. Topologically, residues 226–253 are cytoplasmic; sequence ATRQAQQIRTLSQSLAGAVKRERKAAKT. The helical transmembrane segment at 254-274 threads the bilayer; it reads LGIAVGIYLVCWLPFTVDTLV. Residues 275–284 are Extracellular-facing; sequence DSLLNFITPP. The chain crosses the membrane as a helical span at residues 285–307; that stretch reads LVFDIFIWFAYFNSACNPIIYVF. Over 308-337 the chain is Cytoplasmic; that stretch reads SYRWFRKALKLLLSREIFSPRTPTVDLYHD.

The protein belongs to the G-protein coupled receptor 1 family. Specifically expressed in neurons of the olfactory epithelium, to discrete glomeruli predominantly localized to a confined bulb region. Present in the dorsal area of the main olfactory epithelium. Also present in the limbic brain areas receiving projection from the olfactory system and involved in the regulation of emotions. Also expressed in some brain regions outside the olfactory epithelium, such as the hippocampus, cerebellum, cortex, raphe nuclei, hypothalamus, and habenula.

The protein localises to the cell membrane. With respect to regulation, inhibited by 1-[(5,5- diphenyloxolan-2-yl)methyl]-4-(2-methoxyphenyl)piperazine and N-[(2,2-diphenyl-1,3-dioxolan-4-yl)methyl]-2-(2- methoxyphenoxy)ethan-1-amine small molecules. In terms of biological role, olfactory receptor specific for trimethylamine, a trace amine enriched in the urine of male mice, playing a role in social behavior. Also activated by N-methylpiperidine. Trimethylamine is present at high concentration in the urine of male mice after puberty and acts as an attractant. Trimethylamine-binding causes a conformation change that triggers signaling via G(s)-class of G alpha proteins (GNAL or GNAS). Also required to provide olfactory input into limbic brain areas to regulate emotional behaviors likely via modulation of the serotonin system. The sequence is that of Trace amine-associated receptor 5 from Mus musculus (Mouse).